Consider the following 245-residue polypeptide: UDP-2,3-diacylglucosamine hydrolase (245 aa).

Positions 8, 10, 41, 79, and 114 each coordinate Mn(2+). 79–80 (NR) is a substrate binding site. Substrate-binding residues include aspartate 122, serine 160, lysine 164, lysine 167, and histidine 195. Histidine 195 and histidine 197 together coordinate Mn(2+).

It belongs to the LpxH family. The cofactor is Mn(2+).

Its subcellular location is the cell inner membrane. The enzyme catalyses UDP-2-N,3-O-bis[(3R)-3-hydroxytetradecanoyl]-alpha-D-glucosamine + H2O = 2-N,3-O-bis[(3R)-3-hydroxytetradecanoyl]-alpha-D-glucosaminyl 1-phosphate + UMP + 2 H(+). The protein operates within glycolipid biosynthesis; lipid IV(A) biosynthesis; lipid IV(A) from (3R)-3-hydroxytetradecanoyl-[acyl-carrier-protein] and UDP-N-acetyl-alpha-D-glucosamine: step 4/6. In terms of biological role, hydrolyzes the pyrophosphate bond of UDP-2,3-diacylglucosamine to yield 2,3-diacylglucosamine 1-phosphate (lipid X) and UMP by catalyzing the attack of water at the alpha-P atom. Involved in the biosynthesis of lipid A, a phosphorylated glycolipid that anchors the lipopolysaccharide to the outer membrane of the cell. The protein is UDP-2,3-diacylglucosamine hydrolase of Aromatoleum aromaticum (strain DSM 19018 / LMG 30748 / EbN1) (Azoarcus sp. (strain EbN1)).